A 1400-amino-acid chain; its full sequence is MNQEVMNLFNPQAPAQTFDSIRISIASPEKILSWSYGEIKKPETINYRTFKPERDGLFCARIFGPIKDYECLCGKYKRMKYKGIICEKCGVEVTLSRVRRERMGHIELAAPVAHIWFLKSLPSRIGTLLDMTLKDIERILYFENYIVTEPGLTSLKEHQLLSEEEYMIAVDEFGEDQFTALIGAEAIYELLASMELEKIAADLRVDLAETTSDLKQKKLMKRLKIVENFLESGNRPEWMIMKIVPVIPPDLRPLVPLDGGRFATSDLNDLYRRVINRNNRLKRLIELRAPGIIIRNEKRMLQEAVDALFDNGRRGRVITGANKRPLKSLSDMLKGKQGRFRQNLLGKRVDYSGRSVIVTGPELKLHQCGLPKKMALELFKPFIYARLDAKGYSSTVKQAKKLVEKERPEVWDILDEVIREHPVLLNRAPTLHRLGIQAFEPTLIEGKAIQLHPLVCTAFNADFDGDQMAVHVPLSLEAQLEARVLMMSTNNILHPANGAPIIVPSQDMVLGLYYLSIVAEKEPGEGMIFADMGELQHALENKVVTLHTKIKGRFKTVDAEGNPVLKIYDTTPGRMIMGELLPKNVNVPFDICNQEMTKKNISKMIDHVYRHCGQKETVIFCDRIMQLGFAHACRAGISFGKDDMVIPESKAKIVAETEALTTEYEQQYNDGLITQGEKYNKVVDAWGKATDKITEEMMARLKAVEFDPVTGRQKQMNSVYMMSHSGARGSVNQMRQLGGMRGLMAKPSGEIIETPIISNFKEGLTVNEYFNSTHGARKGLADTALKTANSGYLTRRLVDVAQDAIISEVDCGAEIGLTMQPIVDAGQIVASIGQRVLGRTALDPILHPVTGEVIVEAGRMIEEKDVEIIEKAGIQSIRIRSALTCETRNGVCAKCYGRDLARGTPVNQGEAVGVIAAQSIGEPGTQLTMRTFHLGGTAQVVDSSYLEASYEGTVKLRNRNVVRNSDGNLVVMGRNMAVLILDATGKERAVHRVTYGSRLFVDEGDTVKRGQRIAEWDPYTRPIMTEVEGYVEFEDLVDGLSVSETADESTGITKRVVIDWRSTPRGSDLKPAMVIKDKAGKILKLSKGGDARFLLSVESILSVEPGAHVKAGDVIARLPMESAKTKDITGGLPRVAELFEARRPKDHAIIAEIDGTVRFGRDYKNKRRIIIEPNDDTIEPVEYLIPKGKPFHLQDGDVIEKGEYILDGNPAPHDILAIKGVEALASYLVNEIQEVYRLQGVLINDKHIEVIVRQMLQKVEITESGDTGYIPGDHVDRIELEEINERLIEEGKKPGSGNPVLLGITKASLQTPSFISAASFQETTRVLTEAAVAGKMDTLQGLKENVIVGRLIPAGTGGMTNQIRRIATARDELIIDERRKTSGSAEANAMLVDMTNNAAE.

Residues cysteine 71, cysteine 73, cysteine 86, and cysteine 89 each contribute to the Zn(2+) site. 3 residues coordinate Mg(2+): aspartate 462, aspartate 464, and aspartate 466. Positions 811, 885, 892, and 895 each coordinate Zn(2+).

The protein belongs to the RNA polymerase beta' chain family. As to quaternary structure, the RNAP catalytic core consists of 2 alpha, 1 beta, 1 beta' and 1 omega subunit. When a sigma factor is associated with the core the holoenzyme is formed, which can initiate transcription. Mg(2+) serves as cofactor. Zn(2+) is required as a cofactor.

The catalysed reaction is RNA(n) + a ribonucleoside 5'-triphosphate = RNA(n+1) + diphosphate. Functionally, DNA-dependent RNA polymerase catalyzes the transcription of DNA into RNA using the four ribonucleoside triphosphates as substrates. In Brucella abortus (strain S19), this protein is DNA-directed RNA polymerase subunit beta'.